Here is a 431-residue protein sequence, read N- to C-terminus: Adenylosuccinate synthetase (431 aa).

Residues 21 to 27 and 49 to 51 contribute to the GTP site; these read GDEGKGK and GHT. Asp-22 serves as the catalytic Proton acceptor. Residues Asp-22 and Gly-49 each contribute to the Mg(2+) site. Residues 22–25, 47–50, Thr-138, Arg-152, Asn-230, Thr-245, and Arg-309 contribute to the IMP site; these read DEGK and NAGH. His-50 serves as the catalytic Proton donor. Position 305–311 (305–311) interacts with substrate; the sequence is ATTGRPR. Residues Arg-311, 337–339, and 419–421 contribute to the GTP site; these read KLD and GNG.

The protein belongs to the adenylosuccinate synthetase family. In terms of assembly, homodimer. Requires Mg(2+) as cofactor.

Its subcellular location is the cytoplasm. It catalyses the reaction IMP + L-aspartate + GTP = N(6)-(1,2-dicarboxyethyl)-AMP + GDP + phosphate + 2 H(+). It participates in purine metabolism; AMP biosynthesis via de novo pathway; AMP from IMP: step 1/2. Functionally, plays an important role in the de novo pathway and in the salvage pathway of purine nucleotide biosynthesis. Catalyzes the first committed step in the biosynthesis of AMP from IMP. The sequence is that of Adenylosuccinate synthetase from Paramecium tetraurelia.